A 149-amino-acid polypeptide reads, in one-letter code: MSLVTEFKEFALKGNVMDLAVGVIIGGAFSTIVNSVVKDLIMPVVGVATGGLDFSNKFILLGHIPPNFKGNPDSYKDLQTAGVAAFGYGSFITVAINFVILALIIFMMVKFINKLRAPAPAEAAAPPPTPEDVLLLREIRDSLKNSPRV.

3 consecutive transmembrane segments (helical) span residues 16 to 36 (VMDL…VNSV), 40 to 60 (LIMP…KFIL), and 89 to 109 (GSFI…FMMV).

This sequence belongs to the MscL family. As to quaternary structure, homopentamer.

The protein resides in the cell inner membrane. Channel that opens in response to stretch forces in the membrane lipid bilayer. May participate in the regulation of osmotic pressure changes within the cell. This is Large-conductance mechanosensitive channel from Paraburkholderia phymatum (strain DSM 17167 / CIP 108236 / LMG 21445 / STM815) (Burkholderia phymatum).